The primary structure comprises 432 residues: MKKVSVIAAAVAATLAAGSAFAVDFHGYMRAGVGVNADGGQQLTFEKNKVGRLGNESDIYGEIQLGKEVYNNNGKTFYVDSMLAMTSNGSNDWEGTAANCGLDGTKVKCVDDAQFALRQFNVQAKGVLNFAPEATLWAGKRYYQRHDIHISDFYYWNISGAGAGVEGIEAGPGKLSFAWVRNDRNDNFNSGMGSGDTPDVGNGGSVNVNTLDVRYAGIPVWENGSLEVGLDYALVNETEDASKAAKDAKDGVMFTAELTQGLDSGFNKTVFQYGTEGYSKAFAFYGDGSWYGAEARDGASGYRFINWGVIGLGDNWELGHQLVYGVGEDMWAADHKWEAMSAVVRPVFKWDDNHKTIFEAGYAIDDNDGDENKYGKLTVAQAWSAGSSFWARPEIRLYASYLTADKADNSNTFDSGRSDDTFQFGVQAEAWW.

The first 22 residues, 1 to 22 (MKKVSVIAAAVAATLAAGSAFA), serve as a signal peptide directing secretion.

The protein belongs to the porin LamB (TC 1.B.3) family. In terms of assembly, homotrimer formed of three 18-stranded antiparallel beta-barrels, containing three independent channels.

It is found in the cell outer membrane. It carries out the reaction beta-maltose(in) = beta-maltose(out). In terms of biological role, involved in the transport of maltose and maltodextrins. This chain is Maltoporin, found in Vibrio parahaemolyticus serotype O3:K6 (strain RIMD 2210633).